The following is a 207-amino-acid chain: Holliday junction branch migration complex subunit RuvA (207 aa).

The domain I stretch occupies residues 1 to 65; sequence MYDYIRGTLT…ETEHLLYGFH (65 aa). Residues 66-144 are domain II; the sequence is SREERECFRI…DLLPLDSRVE (79 aa). Residues 145–150 are flexible linker; that stretch reads TSQTHT. The tract at residues 150–207 is domain III; sequence TTSSCLEEGIQALAALGYSKIAAERMIAEAIKDLPEGSSLTDILPIALKKNFSGVNKD.

It belongs to the RuvA family. Homotetramer. Forms an RuvA(8)-RuvB(12)-Holliday junction (HJ) complex. HJ DNA is sandwiched between 2 RuvA tetramers; dsDNA enters through RuvA and exits via RuvB. An RuvB hexamer assembles on each DNA strand where it exits the tetramer. Each RuvB hexamer is contacted by two RuvA subunits (via domain III) on 2 adjacent RuvB subunits; this complex drives branch migration. In the full resolvosome a probable DNA-RuvA(4)-RuvB(12)-RuvC(2) complex forms which resolves the HJ.

It localises to the cytoplasm. The RuvA-RuvB-RuvC complex processes Holliday junction (HJ) DNA during genetic recombination and DNA repair, while the RuvA-RuvB complex plays an important role in the rescue of blocked DNA replication forks via replication fork reversal (RFR). RuvA specifically binds to HJ cruciform DNA, conferring on it an open structure. The RuvB hexamer acts as an ATP-dependent pump, pulling dsDNA into and through the RuvAB complex. HJ branch migration allows RuvC to scan DNA until it finds its consensus sequence, where it cleaves and resolves the cruciform DNA. In Chlamydia pneumoniae (Chlamydophila pneumoniae), this protein is Holliday junction branch migration complex subunit RuvA.